A 64-amino-acid polypeptide reads, in one-letter code: Palmitoyl-CoA hydrolase (64 aa).

It belongs to the type-B carboxylesterase/lipase family. In terms of assembly, monomer and homotrimer.

The protein resides in the microsome. It localises to the endoplasmic reticulum. It catalyses the reaction hexadecanoyl-CoA + H2O = hexadecanoate + CoA + H(+). Functionally, hydrolysis of a variety of CoA thioesters of long-chain fatty acids. The chain is Palmitoyl-CoA hydrolase from Rattus norvegicus (Rat).